A 167-amino-acid chain; its full sequence is Transmembrane protein 220 (167 aa).

Helical transmembrane passes span Pro10–Val30, Trp40–Val60, Val69–Leu89, Glu104–Ser122, and Met130–His150.

The protein resides in the membrane. The protein is Transmembrane protein 220 (Tmem220) of Mus musculus (Mouse).